The sequence spans 150 residues: Depactin (150 aa).

The ADF-H domain occupies 3 to 148; the sequence is SGTALDENVK…SEEAIGDKIK (146 aa).

It belongs to the actin-binding proteins ADF family.

Depactin interacts with actin at some of its 12 N-terminal residues and 20 C-terminal residues. Binds to actin monomers from filaments and in solution. The protein is Depactin of Asterias amurensis (Northern Pacific seastar).